Here is a 108-residue protein sequence, read N- to C-terminus: Small ribosomal subunit protein uS17 (108 aa).

Belongs to the universal ribosomal protein uS17 family. In terms of assembly, part of the 30S ribosomal subunit.

One of the primary rRNA binding proteins, it binds specifically to the 5'-end of 16S ribosomal RNA. In Methanocorpusculum labreanum (strain ATCC 43576 / DSM 4855 / Z), this protein is Small ribosomal subunit protein uS17.